The sequence spans 458 residues: Dynein regulatory complex protein 10 (458 aa).

3 coiled-coil regions span residues 96–137 (GQTL…HKVN), 209–255 (IQDI…KNHL), and 285–379 (QVRL…IRAE). In terms of domain architecture, IQ spans 397 to 426 (MVRAATLIQAVWKGYLVRSILRSKKKKRGK). A disordered region spans residues 419–458 (SKKKKRGKGKGKDKGKGKEKPKEEKAKEKKPKAKGKGKKK). Basic and acidic residues predominate over residues 428 to 445 (KGKDKGKGKEKPKEEKAK). Positions 446–458 (EKKPKAKGKGKKK) are enriched in basic residues.

The protein belongs to the DRC10 family. As to quaternary structure, component of the nexin-dynein regulatory complex (N-DRC). Interacts with CFAP52.

The protein resides in the cytoplasm. It is found in the cytoskeleton. The protein localises to the flagellum axoneme. Functionally, component of the nexin-dynein regulatory complex (N-DRC), a key regulator of ciliary/flagellar motility which maintains the alignment and integrity of the distal axoneme and regulates microtubule sliding in motile axonemes. In Mus musculus (Mouse), this protein is Dynein regulatory complex protein 10 (Iqcd).